The sequence spans 454 residues: Ornithine aminotransferase (454 aa).

Residues glycine 124, threonine 125, and glutamine 267 each coordinate pyridoxal 5'-phosphate. Lysine 293 carries the N6-(pyridoxal phosphate)lysine modification. Threonine 321 serves as a coordination point for pyridoxal 5'-phosphate.

Belongs to the class-III pyridoxal-phosphate-dependent aminotransferase family. Homotetramer; dimer of dimers. The cofactor is pyridoxal 5'-phosphate.

The catalysed reaction is L-ornithine + 2-oxoglutarate = L-glutamate 5-semialdehyde + L-glutamate. It carries out the reaction L-lysine + 2-oxoglutarate = (S)-2-amino-6-oxohexanoate + L-glutamate. Catalyzes the conversion of L-ornithine and 2-oxoglutarate to L-glutamate semialdehyde and L-glutamate. L-ornithine is the best substrate, but the enzyme also shows good activity toward L-lysine, and low activity toward D-ornithine, D-lysine, 5-aminovalerate, 6-aminohexanoate and GABA. The enzyme activity is specific for 2-oxoglutarate. This Pyrococcus horikoshii (strain ATCC 700860 / DSM 12428 / JCM 9974 / NBRC 100139 / OT-3) protein is Ornithine aminotransferase.